Reading from the N-terminus, the 264-residue chain is tRNA (guanine-N(1)-)-methyltransferase (264 aa).

Residues G125 and 145 to 150 (LGDFVL) each bind S-adenosyl-L-methionine.

This sequence belongs to the RNA methyltransferase TrmD family. In terms of assembly, homodimer.

It is found in the cytoplasm. The enzyme catalyses guanosine(37) in tRNA + S-adenosyl-L-methionine = N(1)-methylguanosine(37) in tRNA + S-adenosyl-L-homocysteine + H(+). Its function is as follows. Specifically methylates guanosine-37 in various tRNAs. The sequence is that of tRNA (guanine-N(1)-)-methyltransferase from Burkholderia vietnamiensis (strain G4 / LMG 22486) (Burkholderia cepacia (strain R1808)).